A 145-amino-acid polypeptide reads, in one-letter code: Aklanonic acid methyl ester cyclase DnrD (145 aa).

Residue Q106 participates in substrate binding.

It belongs to the polyketide cyclase DnrD family. As to quaternary structure, homotetramer.

It catalyses the reaction methyl aklanonate = aklaviketone. It functions in the pathway antibiotic biosynthesis; daunorubicin biosynthesis. The protein operates within antibiotic biosynthesis; carminomycin biosynthesis. Its pathway is antibiotic biosynthesis; rhodomycin biosynthesis. It participates in antibiotic biosynthesis; aclacinomycin biosynthesis. Functionally, involved in the biosynthesis of aklavinone which is an important precursor common to the formation of the clinically significant anthracyclines such as carminomycin, daunorubicin (daunomycin), rhodomycin, aclacinomycin T (aklavin) and aclacinomycin A (aclarubicin). These compounds are aromatic polyketide antibiotics that exhibit high cytotoxicity and are widely applied in the chemotherapy of a variety of cancers. Catalyzes the cyclization of aklanonic acid methyl ester to yield aklaviketone presumably via an intramolecular aldol condensation mechanism, although water is not eliminated. This Streptomyces peucetius protein is Aklanonic acid methyl ester cyclase DnrD (dnrD).